The chain runs to 707 residues: Choline transporter-like protein 4 (707 aa).

At 1-33 (MGGKQDQDKEAYGKPAKYDPSFRGPIRNRSCTD) the chain is on the cytoplasmic side. A helical transmembrane segment spans residues 34–54 (IICCVLFFLFILGYIAVGILA). The Extracellular segment spans residues 55-227 (WVYGDPKQVL…KIFEDFAQSW (173 aa)). Asparagine 68, asparagine 185, and asparagine 196 each carry an N-linked (GlcNAc...) asparagine glycan. A helical membrane pass occupies residues 228 to 248 (YWILIALGLALVLSLLFILLL). At 249–250 (RL) the chain is on the cytoplasmic side. Residues 251 to 271 (VAGPLVFVLIIGVLGVLAYGI) form a helical membrane-spanning segment. Residues 272–307 (YHCWEEYRVLRDKGASISQLGFTTNLSAYRNVQETW) lie on the Extracellular side of the membrane. Asparagine 296 is a glycosylation site (N-linked (GlcNAc...) asparagine). The chain crosses the membrane as a helical span at residues 308–328 (LAALIILAVLEGVLLLMLIFL). Residues 329–356 (RQRICIAIALLKEASRAVGYIMSTMFYP) lie on the Cytoplasmic side of the membrane. The helical transmembrane segment at 357–377 (LVTFALLLVCIAYWAIIALFL) threads the bilayer. Residues 378-452 (ATSGQPQYVF…AVLGLFWTIN (75 aa)) are Extracellular-facing. N-linked (GlcNAc...) asparagine glycans are attached at residues asparagine 391, asparagine 403, and asparagine 413. The chain crosses the membrane as a helical span at residues 453-473 (WVLALGQCVLAGAFASFYWAF). The Cytoplasmic portion of the chain corresponds to 474 to 498 (HKPRDIPTFPLGSAFLRTLRYHTGS). A helical transmembrane segment spans residues 499–519 (LAFGALILTLVQIARVILEYI). At 520-557 (DHKLRGAQNPLTRCILCCFKCCLWCLEKFIKFLNRNAY) the chain is on the extracellular side. Residues 558 to 578 (IMIAIYGKNFCVSAKNAFMLL) form a helical membrane-spanning segment. The Cytoplasmic segment spans residues 579-594 (MRNIVRVVVLDKVTDL). The chain crosses the membrane as a helical span at residues 595–615 (LLFFGKLLVVGGVGVLSFFFF). Residues 616–635 (TGRIPSLGKTFENPQLNYYW) lie on the Extracellular side of the membrane. A helical membrane pass occupies residues 636 to 656 (LPIMVSILGAYLIASGFFSVF). Residues 657–707 (GMCVDTLFLCFLEDLERNDGSADRPYYMSKSLLKILGKKNKGTPGDKKRKK) lie on the Cytoplasmic side of the membrane.

It belongs to the CTL (choline transporter-like) family. N-glycosylated; N-glycosylation of Asn-68 and Asn-391 is required for a proper thiamine pyrophosphate uptake.

The protein resides in the membrane. Its subcellular location is the apical cell membrane. It carries out the reaction choline(out) + n H(+)(in) = choline(in) + n H(+)(out). It catalyses the reaction thiamine diphosphate(out) = thiamine diphosphate(in). In terms of biological role, choline transporter that plays a role in the choline-acetylcholine system and is required to the efferent innervation of hair cells in the olivocochlear bundle for the maintenance of physiological function of outer hair cells and the protection of hair cells from acoustic injury. Also described as a thiamine pyrophosphate transporter in colon, may mediate the absorption of microbiota-generated thiamine pyrophosphate and contribute to host thiamine (vitamin B1) homeostasis. The chain is Choline transporter-like protein 4 from Bos taurus (Bovine).